The sequence spans 250 residues: MVAVPARYASTRLPGKPLQLIGDRPMIQHVAERALAAGAREVWVATDDARIAEAIQGLAGVRVAMTSSVHLSGTDRLAECARIAGWDAATCVVNLQGDEPFAPAAGIRAVAQVLQRSGAEMATLAAPVDSAHDLFDPNVVKLVRNAHGDALYFSRAPIPWHRDSFAAQRDAVPAGNHWLRHIGIYAYRAGFLQQFAAMPPGTLERIESLEQLRVLEAGYRIAVALTPEQFPPGIDTPEDLQRAQAQLASA.

It belongs to the KdsB family.

It is found in the cytoplasm. The catalysed reaction is 3-deoxy-alpha-D-manno-oct-2-ulosonate + CTP = CMP-3-deoxy-beta-D-manno-octulosonate + diphosphate. Its pathway is nucleotide-sugar biosynthesis; CMP-3-deoxy-D-manno-octulosonate biosynthesis; CMP-3-deoxy-D-manno-octulosonate from 3-deoxy-D-manno-octulosonate and CTP: step 1/1. The protein operates within bacterial outer membrane biogenesis; lipopolysaccharide biosynthesis. In terms of biological role, activates KDO (a required 8-carbon sugar) for incorporation into bacterial lipopolysaccharide in Gram-negative bacteria. This is 3-deoxy-manno-octulosonate cytidylyltransferase from Xanthomonas campestris pv. campestris (strain 8004).